Here is a 487-residue protein sequence, read N- to C-terminus: MDYIVGFVSISLVALLYFLLFKPKHTNLPPSPPAWPIVGHLPDLISKNSPPFLDYMSNIAQKYGPLIHLKFGLHSSIFASTKEAAMEVLQTNDKVLSGRQPLPCFRIKPHIDYSILWSDSNSYWKKGRKILHTEIFSQKMLQAQEKNRERVAGNLVNFIMTKVGDVVELRSWLFGCALNVLGHVVFSKDVFEYSDQSDEVGMDKLIHGMLMTGGDFDVASYFPVLARFDLHGLKRKMDEQFKLLIKIWEGEVLARRANRNPEPKDMLDVLIANDFNEHQINAMFMETFGPGSDTNSNIIEWALAQLIKNPDKLAKLREELDRVVGRSSTVKESHFSELPYLQACVKETMRLYPPISIMIPHRCMETCQVMGYTIPKGMDVHVNAHAIGRDPKDWKDPLKFQPERFLDSDIEYNGKQFQFIPFGSGRRICPGRPLAVRIIPLVLASLVHAFGWELPDGVPNEKLDMEELFTLSLCMAKPLRVIPKVRI.

Position 429 (Cys-429) interacts with heme.

Belongs to the cytochrome P450 family. Heme serves as cofactor.

It localises to the endoplasmic reticulum membrane. Its subcellular location is the microsome membrane. It carries out the reaction (R)-N-methylcoclaurine + (S)-N-methylcoclaurine + reduced [NADPH--hemoprotein reductase] + O2 = berbamunine + oxidized [NADPH--hemoprotein reductase] + 2 H2O + H(+). It participates in alkaloid biosynthesis; berbamunine biosynthesis; berbamunine from (R)-N-methylcoclaurine and (S)-N-methylcoclaurine: step 1/1. Forms the bisbenzylisoquinoline alkaloid berbamunine by phenol oxidation of N-methylcoclaurine without the incorporation of oxygen into the product. Oxidatively couples either two molecules of (R)-N-methylcoclaurine to form the (R,R) dimer guattegaumerine or one molecule each of (R)- and (S)-N-methylcoclaurine to form the (R,S) dimer berbamunine. The polypeptide is Berbamunine synthase (CYP80A1) (Berberis stolonifera (Barberry)).